The following is a 391-amino-acid chain: Succinate--CoA ligase [ADP-forming] subunit beta (391 aa).

An ATP-grasp domain is found at 9-248 (KDILRKFGVA…ITEEDPFEVE (240 aa)). ATP is bound by residues lysine 50, 57 to 59 (GRG), glutamate 103, methionine 106, and glutamate 111. Mg(2+) contacts are provided by asparagine 203 and aspartate 217. Substrate-binding positions include asparagine 268 and 325–327 (GIV).

It belongs to the succinate/malate CoA ligase beta subunit family. As to quaternary structure, heterotetramer of two alpha and two beta subunits. Requires Mg(2+) as cofactor.

It carries out the reaction succinate + ATP + CoA = succinyl-CoA + ADP + phosphate. It catalyses the reaction GTP + succinate + CoA = succinyl-CoA + GDP + phosphate. It functions in the pathway carbohydrate metabolism; tricarboxylic acid cycle; succinate from succinyl-CoA (ligase route): step 1/1. Succinyl-CoA synthetase functions in the citric acid cycle (TCA), coupling the hydrolysis of succinyl-CoA to the synthesis of either ATP or GTP and thus represents the only step of substrate-level phosphorylation in the TCA. The beta subunit provides nucleotide specificity of the enzyme and binds the substrate succinate, while the binding sites for coenzyme A and phosphate are found in the alpha subunit. The polypeptide is Succinate--CoA ligase [ADP-forming] subunit beta (Chlorobium phaeovibrioides (strain DSM 265 / 1930) (Prosthecochloris vibrioformis (strain DSM 265))).